A 224-amino-acid chain; its full sequence is Urease accessory protein UreF (224 aa).

This sequence belongs to the UreF family. In terms of assembly, ureD, UreF and UreG form a complex that acts as a GTP-hydrolysis-dependent molecular chaperone, activating the urease apoprotein by helping to assemble the nickel containing metallocenter of UreC. The UreE protein probably delivers the nickel.

Its subcellular location is the cytoplasm. Its function is as follows. Required for maturation of urease via the functional incorporation of the urease nickel metallocenter. In Methylorubrum populi (strain ATCC BAA-705 / NCIMB 13946 / BJ001) (Methylobacterium populi), this protein is Urease accessory protein UreF.